The primary structure comprises 254 residues: rRNA N-glycosylase sapovaccarin-S1 (254 aa).

This sequence belongs to the ribosome-inactivating protein family. Type 1 RIP subfamily. In terms of tissue distribution, expressed in seeds; most abundant in the perisperm.

The enzyme catalyses Endohydrolysis of the N-glycosidic bond at one specific adenosine on the 28S rRNA.. Exhibits N-glycosylase activity. Catalyzes the release of one adenine from a ribosome. Acts as a ribosome-inactivating protein and inhibits protein synthesis in a rabbit-reticulocyte lysate system and in various cell lines (in vitro). Induces cell death in Huh-7 liver cells. May contribute to the protection against plant pests and predators or play a role in regulating the death of plant cells. This Gypsophila vaccaria (Cow soapwort) protein is rRNA N-glycosylase sapovaccarin-S1.